A 573-amino-acid polypeptide reads, in one-letter code: 60 kDa heat shock protein, mitochondrial (573 aa).

Residues 1 to 26 (MLRLPTVLRQMRPVSRALAPHLTRAY) constitute a mitochondrion transit peptide. At Lys31 the chain carries N6-succinyllysine. 2 positions are modified to phosphoserine: Ser67 and Ser70. Lys75 lines the ATP pocket. Residue Lys75 is modified to N6-acetyllysine. The residue at position 82 (Lys82) is an N6-acetyllysine; alternate. The residue at position 82 (Lys82) is an N6-succinyllysine; alternate. Lys87 is modified (N6-acetyllysine). Phosphotyrosine is present on Tyr90. Position 91 is an N6-acetyllysine (Lys91). An ATP-binding site is contributed by 111–115 (DGTTT). Residue Lys125 is modified to N6-acetyllysine; alternate. Lys125 is modified (N6-succinyllysine; alternate). Lys130 is modified (N6-acetyllysine). Lys133 is modified (N6-acetyllysine; alternate). Residue Lys133 is modified to N6-succinyllysine; alternate. Lys133 carries the N6-malonyllysine; alternate modification. An N6-acetyllysine modification is found at Lys156. Residues Lys191, Lys202, Lys205, Lys218, and Lys236 each carry the N6-acetyllysine; alternate modification. Residues Lys191, Lys202, Lys205, Lys218, and Lys236 each carry the N6-succinyllysine; alternate modification. Lys249 is modified (N6-acetyllysine). Lys250 is subject to N6-acetyllysine; alternate. Lys250 carries the post-translational modification N6-succinyllysine; alternate. N6-acetyllysine occurs at positions 269 and 292. Lys301 is subject to N6-succinyllysine. Position 314 is an N6-acetyllysine (Lys314). Lys352 is modified (N6-acetyllysine; alternate). Lys352 is modified (N6-succinyllysine; alternate). N6-acetyllysine occurs at positions 359 and 389. Residue Lys396 is modified to N6-acetyllysine; alternate. Lys396 carries the post-translational modification N6-succinyllysine; alternate. Residue Ser410 is modified to Phosphoserine. Gly440 is an ATP binding site. At Lys455 the chain carries N6-acetyllysine; alternate. Position 455 is an N6-succinyllysine; alternate (Lys455). Lys469 carries the post-translational modification N6-acetyllysine. Lys481 carries the post-translational modification N6-acetyllysine; alternate. Position 481 is an N6-succinyllysine; alternate (Lys481). Ser488 carries the phosphoserine modification. Asp520 is an ATP binding site. A Glycyl lysine isopeptide (Lys-Gly) (interchain with G-Cter in SUMO2) cross-link involves residue Lys551.

This sequence belongs to the chaperonin (HSP60) family. Homoheptamer arranged in a ring structure. The functional units of these chaperonins consist of heptameric rings of the large subunit Hsp60, which function as a back-to-back double ring. Interacts with 2 heptameric Hsp10 rings to form the symmetrical football complex. Interacts with HRAS. Interacts with ATAD3A. Interacts with ETFBKMT and EEF1AKMT3. Interacts with MFHAS1.

Its subcellular location is the mitochondrion matrix. It carries out the reaction ATP + H2O + a folded polypeptide = ADP + phosphate + an unfolded polypeptide.. Chaperonin implicated in mitochondrial protein import and macromolecular assembly. Together with Hsp10, facilitates the correct folding of imported proteins. May also prevent misfolding and promote the refolding and proper assembly of unfolded polypeptides generated under stress conditions in the mitochondrial matrix. The functional units of these chaperonins consist of heptameric rings of the large subunit Hsp60, which function as a back-to-back double ring. In a cyclic reaction, Hsp60 ring complexes bind one unfolded substrate protein per ring, followed by the binding of ATP and association with 2 heptameric rings of the co-chaperonin Hsp10. This leads to sequestration of the substrate protein in the inner cavity of Hsp60 where, for a certain period of time, it can fold undisturbed by other cell components. Synchronous hydrolysis of ATP in all Hsp60 subunits results in the dissociation of the chaperonin rings and the release of ADP and the folded substrate protein. This Rattus norvegicus (Rat) protein is 60 kDa heat shock protein, mitochondrial (Hspd1).